A 200-amino-acid polypeptide reads, in one-letter code: COMM domain-containing protein 7 (200 aa).

The COMM domain maps to 133–200 (QLIDMEWRFG…RVRASMECLS (68 aa)).

It belongs to the COMM domain-containing protein 7 family. In terms of assembly, component of the commander complex consisting of the CCC subcomplex and the retriever subcomplex. Component of the CCC (COMMD/CCDC22/CCDC93) subcomplex consisting of COMMD1, COMMD2, COMMD3, COMMD4, COMMD5, COMMD6, COMMD7, COMMD8, COMMD9, COMMD10, CCDC22 and CCDC93; within the complex forms a heterodimer with COMMD9. Interacts with RELA. Interacts with CCDC22, CCDC93, SCNN1B, CUL7.

The protein resides in the cytoplasmic vesicle. Its function is as follows. Scaffold protein in the commander complex that is essential for endosomal recycling of transmembrane cargos; the commander complex is composed of the CCC subcomplex and the retriever subcomplex. May modulate activity of cullin-RING E3 ubiquitin ligase (CRL) complexes. Associates with the NF-kappa-B complex and suppresses its transcriptional activity. The chain is COMM domain-containing protein 7 (Commd7) from Mus musculus (Mouse).